Consider the following 467-residue polypeptide: 3-isopropylmalate dehydratase large subunit (467 aa).

[4Fe-4S] cluster-binding residues include Cys-349, Cys-409, and Cys-412.

Belongs to the aconitase/IPM isomerase family. LeuC type 1 subfamily. Heterodimer of LeuC and LeuD. [4Fe-4S] cluster serves as cofactor.

The catalysed reaction is (2R,3S)-3-isopropylmalate = (2S)-2-isopropylmalate. Its pathway is amino-acid biosynthesis; L-leucine biosynthesis; L-leucine from 3-methyl-2-oxobutanoate: step 2/4. In terms of biological role, catalyzes the isomerization between 2-isopropylmalate and 3-isopropylmalate, via the formation of 2-isopropylmaleate. This chain is 3-isopropylmalate dehydratase large subunit, found in Ruegeria sp. (strain TM1040) (Silicibacter sp.).